Here is a 117-residue protein sequence, read N- to C-terminus: MDMRVPAQLLGLLLLWLPGAKCDIQMTQSPSTLSASVGDRVTITCRASQSISSWLAWYQQKPGKAPKLLIYKASSLESGVPSRFSGSGSGTEFTLTISSLQPDDFATYYCQQYNSYS.

An N-terminal signal peptide occupies residues 1 to 22; it reads MDMRVPAQLLGLLLLWLPGAKC. The segment at 23–45 is framework-1; that stretch reads DIQMTQSPSTLSASVGDRVTITC. Residues 24–117 form the Ig-like domain; the sequence is IQMTQSPSTL…YYCQQYNSYS (94 aa). Cys45 and Cys110 are joined by a disulfide. Positions 46 to 56 are complementarity-determining-1; it reads RASQSISSWLA. A framework-2 region spans residues 57-71; that stretch reads WYQQKPGKAPKLLIY. The segment at 72–78 is complementarity-determining-2; sequence KASSLES. The interval 79–110 is framework-3; the sequence is GVPSRFSGSGSGTEFTLTISSLQPDDFATYYC. The tract at residues 111–117 is complementarity-determining-3; that stretch reads QQYNSYS.

Immunoglobulins are composed of two identical heavy chains and two identical light chains; disulfide-linked.

It is found in the secreted. The protein resides in the cell membrane. Functionally, v region of the variable domain of immunoglobulin light chains that participates in the antigen recognition. Immunoglobulins, also known as antibodies, are membrane-bound or secreted glycoproteins produced by B lymphocytes. In the recognition phase of humoral immunity, the membrane-bound immunoglobulins serve as receptors which, upon binding of a specific antigen, trigger the clonal expansion and differentiation of B lymphocytes into immunoglobulins-secreting plasma cells. Secreted immunoglobulins mediate the effector phase of humoral immunity, which results in the elimination of bound antigens. The antigen binding site is formed by the variable domain of one heavy chain, together with that of its associated light chain. Thus, each immunoglobulin has two antigen binding sites with remarkable affinity for a particular antigen. The variable domains are assembled by a process called V-(D)-J rearrangement and can then be subjected to somatic hypermutations which, after exposure to antigen and selection, allow affinity maturation for a particular antigen. The sequence is that of Immunoglobulin kappa variable 1-5 from Homo sapiens (Human).